Here is a 298-residue protein sequence, read N- to C-terminus: Tyrosine recombinase XerC (298 aa).

Positions 1 to 84 (MNHIQEAFLN…TLRTFYEYWM (84 aa)) constitute a Core-binding (CB) domain. Positions 105-286 (YLPQFFYEEE…SNQQLRKVYL (182 aa)) constitute a Tyr recombinase domain. Residues arginine 145, lysine 169, histidine 238, arginine 241, and histidine 264 contribute to the active site. Tyrosine 273 (O-(3'-phospho-DNA)-tyrosine intermediate) is an active-site residue.

The protein belongs to the 'phage' integrase family. XerC subfamily. In terms of assembly, forms a cyclic heterotetrameric complex composed of two molecules of XerC and two molecules of XerD.

The protein localises to the cytoplasm. Site-specific tyrosine recombinase, which acts by catalyzing the cutting and rejoining of the recombining DNA molecules. The XerC-XerD complex is essential to convert dimers of the bacterial chromosome into monomers to permit their segregation at cell division. It also contributes to the segregational stability of plasmids. This is Tyrosine recombinase XerC from Staphylococcus aureus (strain JH1).